The sequence spans 177 residues: uncharacterized protein (177 aa).

Residues 1–27 (MSHSRRAAPTQDQCHTPGFPTSRETSG) are disordered.

This is an uncharacterized protein from Homo sapiens (Human).